Reading from the N-terminus, the 399-residue chain is Acetate kinase (399 aa).

N10 lines the Mg(2+) pocket. ATP is bound at residue K17. Residue R91 participates in substrate binding. Residue D148 is the Proton donor/acceptor of the active site. ATP-binding positions include 208–212, 283–285, and 331–335; these read HLGNG, DCR, and GIGEN. E385 provides a ligand contact to Mg(2+).

It belongs to the acetokinase family. Homodimer. It depends on Mg(2+) as a cofactor. The cofactor is Mn(2+).

The protein localises to the cytoplasm. It carries out the reaction acetate + ATP = acetyl phosphate + ADP. It functions in the pathway metabolic intermediate biosynthesis; acetyl-CoA biosynthesis; acetyl-CoA from acetate: step 1/2. Catalyzes the formation of acetyl phosphate from acetate and ATP. Can also catalyze the reverse reaction. The protein is Acetate kinase of Shewanella amazonensis (strain ATCC BAA-1098 / SB2B).